A 144-amino-acid chain; its full sequence is Large ribosomal subunit protein uL11 (144 aa).

This sequence belongs to the universal ribosomal protein uL11 family. As to quaternary structure, part of the ribosomal stalk of the 50S ribosomal subunit. Interacts with L10 and the large rRNA to form the base of the stalk. L10 forms an elongated spine to which L12 dimers bind in a sequential fashion forming a multimeric L10(L12)X complex. Post-translationally, one or more lysine residues are methylated.

Forms part of the ribosomal stalk which helps the ribosome interact with GTP-bound translation factors. The chain is Large ribosomal subunit protein uL11 from Streptomyces sp. (strain FRI-5).